The following is a 198-amino-acid chain: Peptidyl-tRNA hydrolase (198 aa).

Tyr-15 serves as a coordination point for tRNA. The active-site Proton acceptor is His-20. Positions 66, 68, and 114 each coordinate tRNA.

This sequence belongs to the PTH family. Monomer.

It localises to the cytoplasm. The catalysed reaction is an N-acyl-L-alpha-aminoacyl-tRNA + H2O = an N-acyl-L-amino acid + a tRNA + H(+). Its function is as follows. Hydrolyzes ribosome-free peptidyl-tRNAs (with 1 or more amino acids incorporated), which drop off the ribosome during protein synthesis, or as a result of ribosome stalling. Functionally, catalyzes the release of premature peptidyl moieties from peptidyl-tRNA molecules trapped in stalled 50S ribosomal subunits, and thus maintains levels of free tRNAs and 50S ribosomes. This Cupriavidus taiwanensis (strain DSM 17343 / BCRC 17206 / CCUG 44338 / CIP 107171 / LMG 19424 / R1) (Ralstonia taiwanensis (strain LMG 19424)) protein is Peptidyl-tRNA hydrolase.